The following is a 106-amino-acid chain: MQLRVERKFETFSYLPPLNDQQIARQLQYALSNGYSPAIEFSFTGKAEDLVWTLWKLPLFGAQSPEEVLSEIQACKQQFPNAYIRVVAFDSIRQVQTLMFLVYKPL.

This sequence belongs to the RuBisCO small chain family. In terms of assembly, heterohexadecamer of 8 large and 8 small subunits.

The protein resides in the plastid. Its subcellular location is the cyanelle. Its function is as follows. RuBisCO catalyzes two reactions: the carboxylation of D-ribulose 1,5-bisphosphate, the primary event in carbon dioxide fixation, as well as the oxidative fragmentation of the pentose substrate. Both reactions occur simultaneously and in competition at the same active site. Although the small subunit is not catalytic it is essential for maximal activity. The polypeptide is Ribulose bisphosphate carboxylase small subunit (Cyanophora paradoxa).